The following is a 373-amino-acid chain: Chaperone protein DnaJ (373 aa).

Positions 4–68 (DYYEILGLTK…VKREQYNQFG (65 aa)) constitute a J domain. The segment at 142–224 (GKEIVEPLEK…CKGKTHTKTT (83 aa)) adopts a CR-type zinc-finger fold. Residues Cys-155, Cys-158, Cys-172, Cys-175, Cys-198, Cys-201, Cys-212, and Cys-215 each coordinate Zn(2+). 4 CXXCXGXG motif repeats span residues 155 to 162 (CNTCNGSG), 172 to 179 (CTQCSGMG), 198 to 205 (CSKCNGIG), and 212 to 219 (CLICKGKT).

Belongs to the DnaJ family. Homodimer. Zn(2+) serves as cofactor.

Its subcellular location is the cytoplasm. Functionally, participates actively in the response to hyperosmotic and heat shock by preventing the aggregation of stress-denatured proteins and by disaggregating proteins, also in an autonomous, DnaK-independent fashion. Unfolded proteins bind initially to DnaJ; upon interaction with the DnaJ-bound protein, DnaK hydrolyzes its bound ATP, resulting in the formation of a stable complex. GrpE releases ADP from DnaK; ATP binding to DnaK triggers the release of the substrate protein, thus completing the reaction cycle. Several rounds of ATP-dependent interactions between DnaJ, DnaK and GrpE are required for fully efficient folding. Also involved, together with DnaK and GrpE, in the DNA replication of plasmids through activation of initiation proteins. This chain is Chaperone protein DnaJ, found in Mycoplasma mobile (strain ATCC 43663 / 163K / NCTC 11711) (Mesomycoplasma mobile).